We begin with the raw amino-acid sequence, 309 residues long: MVDLCNDLLSIKEGQKKEFTLHSGNKVSFIKAKIPHKRIQDLTFVNQKTNVRDQESLTEESLADIIKTIKLQQFFPVIGREIDGRIEILDGTRRRASAIYAGADLEVLYSKEYISTLDARKLANDIQTAKEHSIRELGIGLNFLKVSGMSYKDIAKKENLSRAKVTRAFQAASVPQEIISLFPIASELNFNDYKILFNYYKGLEKANESLSSTLPILKEEIKDLDTNLPPDIYKKEILNIIKKSKNRKQNPSLKVDSLFISKDKRTYIKRKENKTNRTLIFTLSKINKTVQREIDEAIRDIISRHLSSS.

The H-T-H motif DNA-binding region spans 152–171 (KDIAKKENLSRAKVTRAFQA).

It belongs to the ParB family.

Transcription activator for the invasion antigens IpaB, IpaC and IpaD. VirB is itself regulated by VirF. The polypeptide is Virulence regulon transcriptional activator VirB (virB) (Shigella flexneri).